The primary structure comprises 380 residues: Alanine racemase (380 aa).

Lysine 41 functions as the Proton acceptor; specific for D-alanine in the catalytic mechanism. An N6-(pyridoxal phosphate)lysine modification is found at lysine 41. Arginine 141 is a binding site for substrate. The active-site Proton acceptor; specific for L-alanine is tyrosine 271. Methionine 318 contributes to the substrate binding site.

Belongs to the alanine racemase family. Requires pyridoxal 5'-phosphate as cofactor.

The catalysed reaction is L-alanine = D-alanine. The protein operates within amino-acid biosynthesis; D-alanine biosynthesis; D-alanine from L-alanine: step 1/1. Catalyzes the interconversion of L-alanine and D-alanine. May also act on other amino acids. This Latilactobacillus sakei subsp. sakei (strain 23K) (Lactobacillus sakei subsp. sakei) protein is Alanine racemase (alr).